Here is a 106-residue protein sequence, read N- to C-terminus: Follitropin subunit beta (106 aa).

6 disulfide bridges follow: Cys-1–Cys-49, Cys-15–Cys-64, Cys-18–Cys-102, Cys-26–Cys-80, Cys-30–Cys-82, and Cys-85–Cys-92. Residues Asn-5 and Asn-22 are each glycosylated (N-linked (GlcNAc...) asparagine).

The protein belongs to the glycoprotein hormones subunit beta family. As to quaternary structure, heterodimer. The active follitropin is a heterodimer composed of an alpha chain/CGA shared with other hormones and a unique beta chain/FSHB shown here.

The protein resides in the secreted. In terms of biological role, together with the alpha chain CGA constitutes follitropin, the follicle-stimulating hormone, and provides its biological specificity to the hormone heterodimer. Binds FSHR, a G protein-coupled receptor, on target cells to activate downstream signaling pathways. Follitropin is involved in follicle development and spermatogenesis in reproductive organs. This chain is Follitropin subunit beta (FSHB), found in Struthio camelus (Common ostrich).